A 224-amino-acid polypeptide reads, in one-letter code: CMRF35-like molecule 6 (224 aa).

Residues 1 to 20 (MTARAWASWRSSALLLLLVP) form the signal peptide. Residues 21–183 (GYFPLSHPMT…HPGSLFSNVR (163 aa)) are Extracellular-facing. Residues 22–130 (YFPLSHPMTV…HDPIVEVEVS (109 aa)) form the Ig-like V-type domain. 2 disulfides stabilise this stretch: Cys43-Cys110 and Cys57-Cys65. Asn90 and Asn99 each carry an N-linked (GlcNAc...) asparagine glycan. The span at 136–151 (TTTASSPQSSMGTSGP) shows a compositional bias: polar residues. The tract at residues 136-174 (TTTASSPQSSMGTSGPPTKLPVHTWPSVTRKDSPEPSPH) is disordered. A helical transmembrane segment spans residues 184–204 (FLLLVLLELPLLLSMLGAVLW). Residues 205 to 224 (VNRPQRSSRSRQNWPKGENQ) are Cytoplasmic-facing.

It belongs to the CD300 family. As to expression, present on the surface of monocytes, neutrophils, a proportion of peripheral blood T- and B-lymphocytes and lymphocytic cell lines.

The protein resides in the cell membrane. This chain is CMRF35-like molecule 6 (CD300C), found in Homo sapiens (Human).